Consider the following 440-residue polypeptide: Phenylacetate-coenzyme A ligase (440 aa).

The protein belongs to the phenylacetyl-CoA ligase family. As to quaternary structure, monomer.

It carries out the reaction 2-phenylacetate + ATP + CoA = phenylacetyl-CoA + AMP + diphosphate. The protein operates within aromatic compound metabolism; phenylacetate degradation. Inhibition of activity is observed in the presence of a 1 mM of the divalent cations zinc, copper, and nickel. Catalyzes the activation of phenylacetic acid (PA) to phenylacetyl-CoA (PA-CoA). Involved in the phenylalanine metabolism. The chain is Phenylacetate-coenzyme A ligase (paaK) from Aromatoleum evansii (Azoarcus evansii).